Here is a 230-residue protein sequence, read N- to C-terminus: Ribonuclease 3 (230 aa).

Positions 5 to 125 (YSRFYNILGY…VIGAIYLDSD (121 aa)) constitute an RNase III domain. E40 lines the Mg(2+) pocket. D44 is an active-site residue. Residues D111 and E114 each coordinate Mg(2+). E114 is a catalytic residue. Residues 153-223 (DSKSKLQEIL…AEKMIEMLSQ (71 aa)) enclose the DRBM domain.

This sequence belongs to the ribonuclease III family. Homodimer. Mg(2+) is required as a cofactor.

It localises to the cytoplasm. The enzyme catalyses Endonucleolytic cleavage to 5'-phosphomonoester.. In terms of biological role, digests double-stranded RNA. Involved in the processing of primary rRNA transcript to yield the immediate precursors to the large and small rRNAs (23S and 16S). Processes some mRNAs, and tRNAs when they are encoded in the rRNA operon. Processes pre-crRNA and tracrRNA of type II CRISPR loci if present in the organism. The polypeptide is Ribonuclease 3 (Francisella tularensis subsp. holarctica (strain OSU18)).